The sequence spans 306 residues: Glutamyl-Q tRNA(Asp) synthetase (306 aa).

L-glutamate is bound by residues 29 to 33 (RFAPS) and Asp65. A 'HIGH' region motif is present at residues 32 to 42 (PSPTGPLHLGN). Residues Cys121, Cys123, Tyr141, and Cys145 each coordinate Zn(2+). L-glutamate-binding residues include Tyr188 and Arg206. A 'KMSKS' region motif is present at residues 244–248 (KLAKR). Lys247 lines the ATP pocket.

This sequence belongs to the class-I aminoacyl-tRNA synthetase family. GluQ subfamily. Zn(2+) is required as a cofactor.

Catalyzes the tRNA-independent activation of glutamate in presence of ATP and the subsequent transfer of glutamate onto a tRNA(Asp). Glutamate is transferred on the 2-amino-5-(4,5-dihydroxy-2-cyclopenten-1-yl) moiety of the queuosine in the wobble position of the QUC anticodon. In Prochlorococcus marinus (strain MIT 9313), this protein is Glutamyl-Q tRNA(Asp) synthetase.